A 399-amino-acid polypeptide reads, in one-letter code: Argininosuccinate synthase (399 aa).

9-17 (AYSGGLDTS) provides a ligand contact to ATP. Position 85 (Tyr-85) interacts with L-citrulline. ATP is bound at residue Gly-115. L-aspartate is bound by residues Thr-117, Asn-121, and Asp-122. Asn-121 provides a ligand contact to L-citrulline. Arg-125, Ser-173, Glu-258, and Tyr-270 together coordinate L-citrulline.

It belongs to the argininosuccinate synthase family. Type 1 subfamily. Homotetramer.

Its subcellular location is the cytoplasm. The enzyme catalyses L-citrulline + L-aspartate + ATP = 2-(N(omega)-L-arginino)succinate + AMP + diphosphate + H(+). The protein operates within amino-acid biosynthesis; L-arginine biosynthesis; L-arginine from L-ornithine and carbamoyl phosphate: step 2/3. The sequence is that of Argininosuccinate synthase from Streptococcus gordonii (strain Challis / ATCC 35105 / BCRC 15272 / CH1 / DL1 / V288).